The primary structure comprises 690 residues: DNA ligase (690 aa).

NAD(+) contacts are provided by residues D36–D40, S85–L86, and E124. The active-site N6-AMP-lysine intermediate is the K126. NAD(+)-binding residues include R147, E184, K308, and K332. Zn(2+) contacts are provided by C426, C429, C444, and C449. Positions N614–L690 constitute a BRCT domain.

It belongs to the NAD-dependent DNA ligase family. LigA subfamily. Mg(2+) serves as cofactor. The cofactor is Mn(2+).

It carries out the reaction NAD(+) + (deoxyribonucleotide)n-3'-hydroxyl + 5'-phospho-(deoxyribonucleotide)m = (deoxyribonucleotide)n+m + AMP + beta-nicotinamide D-nucleotide.. Its function is as follows. DNA ligase that catalyzes the formation of phosphodiester linkages between 5'-phosphoryl and 3'-hydroxyl groups in double-stranded DNA using NAD as a coenzyme and as the energy source for the reaction. It is essential for DNA replication and repair of damaged DNA. The chain is DNA ligase from Prochlorococcus marinus (strain NATL2A).